A 1266-amino-acid polypeptide reads, in one-letter code: Kinesin-like protein KIN-12G (1266 aa).

Residues 1–22 (MPSDCGDDDHGGGSAPAGFELQ) are disordered. The Kinesin motor domain occupies 32–369 (NVQVVIRVRP…LKFAQRAKYI (338 aa)). An ATP-binding site is contributed by 113 to 120 (GQTGSGKT). Coiled coils occupy residues 613-668 (MEFI…SEAV), 817-854 (RSEL…FKRK), 1029-1060 (ARES…AERV), and 1084-1120 (SELL…MNRH).

It belongs to the TRAFAC class myosin-kinesin ATPase superfamily. Kinesin family. KIN-12 subfamily.

This chain is Kinesin-like protein KIN-12G, found in Oryza sativa subsp. japonica (Rice).